The primary structure comprises 1184 residues: Nucleolar protein 6 (1184 aa).

Residues 1 to 10 (MGRIKEKESK) are compositionally biased toward basic and acidic residues. Disordered regions lie at residues 1 to 42 (MGRI…NRVP) and 1133 to 1184 (REQR…NALC).

The protein belongs to the NRAP family. Part of the small subunit (SSU) processome, composed of more than 70 proteins and the RNA chaperone small nucleolar RNA (snoRNA) U3.

It is found in the nucleus. The protein resides in the nucleolus. Its subcellular location is the chromosome. In terms of biological role, part of the small subunit (SSU) processome, first precursor of the small eukaryotic ribosomal subunit. During the assembly of the SSU processome in the nucleolus, many ribosome biogenesis factors, an RNA chaperone and ribosomal proteins associate with the nascent pre-rRNA and work in concert to generate RNA folding, modifications, rearrangements and cleavage as well as targeted degradation of pre-ribosomal RNA by the RNA exosome. The chain is Nucleolar protein 6 from Drosophila virilis (Fruit fly).